Here is a 331-residue protein sequence, read N- to C-terminus: Malate dehydrogenase (331 aa).

14–20 (GAAGSIG) lines the NAD(+) pocket. 2 residues coordinate substrate: R95 and R101. NAD(+)-binding positions include N108, Q115, and 132 to 134 (VGN). 2 residues coordinate substrate: N134 and R165. H190 (proton acceptor) is an active-site residue.

This sequence belongs to the LDH/MDH superfamily. MDH type 2 family.

It carries out the reaction (S)-malate + NAD(+) = oxaloacetate + NADH + H(+). Functionally, catalyzes the reversible oxidation of malate to oxaloacetate. In Rhodococcus jostii (strain RHA1), this protein is Malate dehydrogenase.